Consider the following 872-residue polypeptide: Probably inactive leucine-rich repeat receptor-like protein kinase At5g06940 (872 aa).

An N-terminal signal peptide occupies residues 1–26; the sequence is MATRFKHQFSISLALTFFFFFTKTFS. The Extracellular portion of the chain corresponds to 27–540; sequence FTENEELGNL…RSNFHKKGGK (514 aa). Asn55, Asn63, and Asn86 each carry an N-linked (GlcNAc...) asparagine glycan. LRR repeat units follow at residues 79–98, 99–122, 123–146, 147–169, 171–193, 195–217, 219–243, 244–267, 269–292, 294–316, 317–340, 341–365, 367–389, 391–412, 413–435, 436–459, 460–482, and 484–506; these read SINLQSLNLSGEISDSICDL, PYLTHLDLSLNFFNQPIPLQLSRC, VTLETLNLSSNLIWGTIPDQISEF, SSLKVIDFSSNHVEGMIPEDLGL, FNLQVLNLGSNLLTGIVPPAIGK, SELVVLDLSENSYLVSEIPSFLG, LDKLEQLLLHRSGFHGEIPTSFVGL, TSLRTLDLSLNNLSGEIPRSLGPS, KNLVSLDVSQNKLSGSFPSGICSG, RLINLSLHSNFFEGSLPNSIGEC, LSLERLQVQNNGFSGEFPVVLWKL, PRIKIIRADNNRFTGQVPESVSLAS, LEQVEIVNNSFSGEIPHGLGLVK, LYKFSASQNRFSGELPPNFCDS, PVLSIVNISHNRLLGKIPELKNC, KKLVSLSLAGNAFTGEIPPSLADL, HVLTYLDLSDNSLTGLIPQGLQN, and KLALFNVSFNGLSGEVPHSLVSG. Asn129 is a glycosylation site (N-linked (GlcNAc...) asparagine). N-linked (GlcNAc...) asparagine glycosylation is present at Asn255. Asn297 is a glycosylation site (N-linked (GlcNAc...) asparagine). Residue Asn374 is glycosylated (N-linked (GlcNAc...) asparagine). Asn419 carries N-linked (GlcNAc...) asparagine glycosylation. A glycan (N-linked (GlcNAc...) asparagine) is linked at Asn489. Residues 541–561 traverse the membrane as a helical segment; that stretch reads ALVLSLICLALAIATFLAVLY. Residues 562-872 lie on the Cytoplasmic side of the membrane; the sequence is RYSRKKVQFK…ISSSVSPVSA (311 aa). Thr585 bears the Phosphothreonine mark. Positions 589–863 constitute a Protein kinase domain; that stretch reads LMKVVNESCP…VKVIKLLEGI (275 aa). ATP-binding positions include 595-603 and Lys617; that span reads ESCPSGSEV. Tyr662, Tyr699, Tyr754, and Tyr761 each carry phosphotyrosine.

Belongs to the protein kinase superfamily. Ser/Thr protein kinase family.

The protein localises to the membrane. This chain is Probably inactive leucine-rich repeat receptor-like protein kinase At5g06940, found in Arabidopsis thaliana (Mouse-ear cress).